We begin with the raw amino-acid sequence, 439 residues long: Thymidine phosphorylase (439 aa).

This sequence belongs to the thymidine/pyrimidine-nucleoside phosphorylase family. As to quaternary structure, homodimer.

The enzyme catalyses thymidine + phosphate = 2-deoxy-alpha-D-ribose 1-phosphate + thymine. It functions in the pathway pyrimidine metabolism; dTMP biosynthesis via salvage pathway; dTMP from thymine: step 1/2. Its function is as follows. The enzymes which catalyze the reversible phosphorolysis of pyrimidine nucleosides are involved in the degradation of these compounds and in their utilization as carbon and energy sources, or in the rescue of pyrimidine bases for nucleotide synthesis. This chain is Thymidine phosphorylase, found in Mesorhizobium japonicum (strain LMG 29417 / CECT 9101 / MAFF 303099) (Mesorhizobium loti (strain MAFF 303099)).